The following is a 288-amino-acid chain: tRNA pseudouridine synthase A (288 aa).

The active-site Nucleophile is Asp59. Tyr134 contributes to the substrate binding site.

The protein belongs to the tRNA pseudouridine synthase TruA family. As to quaternary structure, homodimer.

It catalyses the reaction uridine(38/39/40) in tRNA = pseudouridine(38/39/40) in tRNA. In terms of biological role, formation of pseudouridine at positions 38, 39 and 40 in the anticodon stem and loop of transfer RNAs. In Leifsonia xyli subsp. xyli (strain CTCB07), this protein is tRNA pseudouridine synthase A.